Reading from the N-terminus, the 203-residue chain is Cytochrome c biogenesis ATP-binding export protein CcmA (203 aa).

The region spanning 2 to 203 (LEALDLAGVR…KTSQTVRMGA (202 aa)) is the ABC transporter domain. Residue 34-41 (GENGSGKT) participates in ATP binding.

Belongs to the ABC transporter superfamily. CcmA exporter (TC 3.A.1.107) family. In terms of assembly, the complex is composed of two ATP-binding proteins (CcmA) and two transmembrane proteins (CcmB).

It is found in the cell inner membrane. The catalysed reaction is heme b(in) + ATP + H2O = heme b(out) + ADP + phosphate + H(+). Part of the ABC transporter complex CcmAB involved in the biogenesis of c-type cytochromes; once thought to export heme, this seems not to be the case, but its exact role is uncertain. Responsible for energy coupling to the transport system. The protein is Cytochrome c biogenesis ATP-binding export protein CcmA of Pseudomonas aeruginosa.